Here is a 431-residue protein sequence, read N- to C-terminus: Saglin (431 aa).

Positions 1-39 are cleaved as a signal peptide; it reads MSVRDYSGVQVISSRKHRSMSRLPTVLLLLASAAVLAAG. N95 carries N-linked (GlcNAc...) asparagine glycosylation. The stretch at 120 to 169 forms a coiled coil; it reads LDDAQRQMEQEHRQYAATLEEQLHAAQQETQQEQEMKKALQKQLDALTDS.

As to quaternary structure, homodimer. Female salivary gland (at protein level). Not detected in female carcass without salivary glands, midgut and hemolymph (at protein level). Probably not expressed in male tissues.

It is found in the secreted. Functionally, (Microbial infection) Facilitates efficient midgut colonization by Plasmodium berghei parasites. Promotes successful transmission of Plasmodium berghei at low infection densities. Its function is as follows. (Microbial infection) Facilitates efficient midgut colonization by Plasmodium falciparum. The polypeptide is Saglin (Anopheles coluzzii (African malaria mosquito)).